The following is a 966-amino-acid chain: Serine/threonine-protein kinase 10 (966 aa).

A phosphoserine mark is found at S13 and S20. Residues 36–294 (WEIVGELGDG…AAQLLQHPFV (259 aa)) form the Protein kinase domain. ATP-binding positions include 42–50 (LGDGAFGKV) and K65. D157 functions as the Proton acceptor in the catalytic mechanism. An activation segment region spans residues 175–224 (DFGVSAKNLKTLQKRDSFIGTPYWMAPEVVLCETMKDAPYDYKADIWSLG). T185 carries the post-translational modification Phosphothreonine; by autocatalysis. S191 is subject to Phosphoserine. 2 stretches are compositionally biased toward polar residues: residues 341–363 (TQDS…DSST) and 371–392 (QEPV…TTSP). The tract at residues 341-497 (TQDSANVTQP…NLSTSESMDY (157 aa)) is disordered. The span at 421 to 430 (IQMDEEKQIP) shows a compositional bias: basic and acidic residues. Residues S437, S449, S453, and S484 each carry the phosphoserine modification. The segment covering 438–456 (PAASKSQKANQSRPNSSAL) has biased composition (polar residues). Residues 485 to 497 (DCSNLSTSESMDY) are compositionally biased toward polar residues. Phosphoserine occurs at positions 513 and 548. Residues 588–936 (LQLEQMHKRF…LNQKKREQEM (349 aa)) adopt a coiled-coil conformation. Disordered stretches follow at residues 660-692 (KKEV…KKQR), 826-865 (INGA…ENQM), and 901-966 (LDES…GDAS). 2 stretches are compositionally biased toward basic and acidic residues: residues 834-865 (EQRE…ENQM) and 901-946 (LDES…EAEP). T950 is subject to Phosphothreonine. Positions 950–966 (TPSKASNFFPYSSGDAS) are enriched in polar residues.

The protein belongs to the protein kinase superfamily. STE Ser/Thr protein kinase family. STE20 subfamily. In terms of assembly, homodimer; homodimerization is required for activation segment autophosphorylation. In terms of processing, autophosphorylates following homodimerization, leading to activation of the protein. In terms of tissue distribution, expressed predominantly in lymphoid organs such as spleen, thymus, and bone marrow.

Its subcellular location is the cell membrane. The enzyme catalyses L-seryl-[protein] + ATP = O-phospho-L-seryl-[protein] + ADP + H(+). It carries out the reaction L-threonyl-[protein] + ATP = O-phospho-L-threonyl-[protein] + ADP + H(+). Inhibited by the pyrrole-indolinone inhibitor SU11274 (K00593): intercalates between the ATP-binding Lys-65 and alpha-C glutamate (Glu-81), resulting in a partial disordering of the lysine side chain. Also specifically inhibited by erlotinib. Slightly inhibited by gefitinib. Functionally, serine/threonine-protein kinase involved in regulation of lymphocyte migration. Phosphorylates MSN, and possibly PLK1. Involved in regulation of lymphocyte migration by mediating phosphorylation of ERM proteins such as MSN. Acts as a negative regulator of MAP3K1/MEKK1. May also act as a cell cycle regulator by acting as a polo kinase kinase: mediates phosphorylation of PLK1 in vitro; however such data require additional evidences in vivo. The sequence is that of Serine/threonine-protein kinase 10 (Stk10) from Mus musculus (Mouse).